We begin with the raw amino-acid sequence, 358 residues long: Trace amine-associated receptor 7h (358 aa).

Over 1 to 47 (MATDDESFPWDQDSILSRDLLSALSPQLCYENLNRSCVRSPYSPGPR) the chain is Extracellular. The N-linked (GlcNAc...) asparagine glycan is linked to Asn-34. 2 disulfides stabilise this stretch: Cys-37-Cys-201 and Cys-120-Cys-205. Residues 48–68 (LILYAVFGFGAVLAVCGNLLV) form a helical membrane-spanning segment. At 69–83 (MTSILHFRQLHSPAN) the chain is on the cytoplasmic side. The chain crosses the membrane as a helical span at residues 84–104 (FLVASLACADLLVGLTVMPFS). Residues 105 to 125 (MVRSVEGCWYFGDSYCKLHTS) lie on the Extracellular side of the membrane. A helical transmembrane segment spans residues 126 to 143 (FDMSFCCSSLLHLCFISV). Residues 144–166 (DRYIAVSDPLIYPIRFTASVSGK) are Cytoplasmic-facing. A helical membrane pass occupies residues 167 to 187 (CITFSWFLSIIYGFSLIYTGA). Residues 188 to 217 (SEAGLKDLVSALSCVGGCQIPMNQSCVLIN) lie on the Extracellular side of the membrane. A glycan (N-linked (GlcNAc...) asparagine) is linked at Asn-210. Residues 218–238 (FLLFLVPTLVMMTVYSKIFLI) traverse the membrane as a helical segment. Residues 239-274 (AKQQAQNMEKMSKQTTRASDSYKDRVAKRERKAAKT) are Cytoplasmic-facing. Residues 275-295 (LGIAVAAFLLSWLPYLIDSII) form a helical membrane-spanning segment. Residues 296–309 (DAFLGFITPSYVYE) lie on the Extracellular side of the membrane. A helical membrane pass occupies residues 310-333 (ILVWIVYYNSAMNPLIYAFFYPWF). Residues 334-358 (RNAIKLIVTGKILKQNSSTTNLFSE) are Cytoplasmic-facing.

This sequence belongs to the G-protein coupled receptor 1 family.

The protein localises to the cell membrane. Functionally, olfactory receptor specific for N,N-dimethylalkylamines trace amines. Trace amine compounds are enriched in animal body fluids and act on trace amine-associated receptors (TAARs) to elicit both intraspecific and interspecific innate behaviors. Ligand-binding causes a conformation change that triggers signaling via G(s)-class of G alpha proteins (GNAL or GNAS). The chain is Trace amine-associated receptor 7h from Rattus norvegicus (Rat).